The sequence spans 310 residues: Protease HtpX homolog (310 aa).

2 helical membrane passes run 7–27 (SVML…LIGG) and 29–49 (AGMT…YWYS). Position 131 (H131) interacts with Zn(2+). E132 is an active-site residue. Position 135 (H135) interacts with Zn(2+). A run of 2 helical transmembrane segments spans residues 141 to 161 (ILIG…ASMA) and 178 to 198 (PLGF…AALI). Zn(2+) is bound at residue E207. The disordered stretch occupies residues 277–310 (LTGARPQSGGAPSGPERTARNAEDSAKDFWDSLK). The segment covering 293–310 (RTARNAEDSAKDFWDSLK) has biased composition (basic and acidic residues).

The protein belongs to the peptidase M48B family. Zn(2+) is required as a cofactor.

It localises to the cell inner membrane. This chain is Protease HtpX homolog, found in Desulfatibacillum aliphaticivorans.